A 113-amino-acid chain; its full sequence is Large ribosomal subunit protein uL24 (113 aa).

This sequence belongs to the universal ribosomal protein uL24 family. In terms of assembly, part of the 50S ribosomal subunit.

One of two assembly initiator proteins, it binds directly to the 5'-end of the 23S rRNA, where it nucleates assembly of the 50S subunit. Its function is as follows. One of the proteins that surrounds the polypeptide exit tunnel on the outside of the subunit. This is Large ribosomal subunit protein uL24 from Rickettsia typhi (strain ATCC VR-144 / Wilmington).